Reading from the N-terminus, the 336-residue chain is Izumo sperm-egg fusion protein 1 (336 aa).

The first 16 residues, Met1–Ser16, serve as a signal peptide directing secretion. An Ig-like C2-type domain is found at Pro158 to Ser247. Cys179 and Cys236 are joined by a disulfide. The helical transmembrane segment at Ser287–Ile307 threads the bilayer.

It belongs to the Izumo family. Forms a complex with tmem81 and spaca6 on spermatocyte cell membrane. The complex binds to oocyte protein bncr. As to expression, expressed in sperm.

It localises to the cell membrane. Its subcellular location is the cytoplasmic vesicle. The protein localises to the secretory vesicle. The protein resides in the acrosome membrane. Essential sperm cell-surface protein required for fertilization by acting as a ligand for bncr receptor on egg. The interaction of the complex izumo1:spaca6:tmemt81 with bncr is a necessary adhesion event between sperm and egg that is required for fertilization. The polypeptide is Izumo sperm-egg fusion protein 1 (Danio rerio (Zebrafish)).